The following is a 352-amino-acid chain: Probable dual-specificity RNA methyltransferase RlmN (352 aa).

Glu92 acts as the Proton acceptor in catalysis. The 231-residue stretch at 98 to 328 folds into the Radical SAM core domain; the sequence is YKHGFTACIS…ATIRREMGTD (231 aa). A disulfide bridge links Cys105 with Cys333. Cys112, Cys116, and Cys119 together coordinate [4Fe-4S] cluster. S-adenosyl-L-methionine is bound by residues 159 to 160, Ser191, 214 to 216, and Asn290; these read GE and SLH. The active-site S-methylcysteine intermediate is Cys333.

The protein belongs to the radical SAM superfamily. RlmN family. [4Fe-4S] cluster serves as cofactor.

The protein resides in the cytoplasm. It catalyses the reaction adenosine(2503) in 23S rRNA + 2 reduced [2Fe-2S]-[ferredoxin] + 2 S-adenosyl-L-methionine = 2-methyladenosine(2503) in 23S rRNA + 5'-deoxyadenosine + L-methionine + 2 oxidized [2Fe-2S]-[ferredoxin] + S-adenosyl-L-homocysteine. The enzyme catalyses adenosine(37) in tRNA + 2 reduced [2Fe-2S]-[ferredoxin] + 2 S-adenosyl-L-methionine = 2-methyladenosine(37) in tRNA + 5'-deoxyadenosine + L-methionine + 2 oxidized [2Fe-2S]-[ferredoxin] + S-adenosyl-L-homocysteine. Specifically methylates position 2 of adenine 2503 in 23S rRNA and position 2 of adenine 37 in tRNAs. The sequence is that of Probable dual-specificity RNA methyltransferase RlmN from Alkaliphilus metalliredigens (strain QYMF).